A 276-amino-acid polypeptide reads, in one-letter code: Src-like-adapter (276 aa).

A lipid anchor (N-myristoyl glycine) is attached at glycine 2. The SH3 domain occupies 22–82 (LDSDFLAVLS…PGICVARVYH (61 aa)). Residues 84–175 (WLFEGLGRDK…GLCCVLTTPC (92 aa)) form the SH2 domain. An SLA C-terminal region spans residues 212–276 (EGTENPLGVD…FFSSPPYFED (65 aa)). A Phosphoserine modification is found at serine 253. At tyrosine 273 the chain carries Phosphotyrosine.

In terms of assembly, interacts with EPHA2, VAV1, LCP2 and PDGFRB. Homodimer. Homodimerization and interaction with phosphorylated CBL occurs via its C-terminal domain. Interacts with phosphorylated proteins ZAP70, CD3Z, SYK and LAT via its SH2 domain. In terms of tissue distribution, expressed in lung and fetal brain. Weakly expressed in heart, adult brain, placenta, liver, skeletal muscle, kidney and pancreas.

It is found in the cytoplasm. The protein resides in the endosome. Its function is as follows. Adapter protein, which negatively regulates T-cell receptor (TCR) signaling. Inhibits T-cell antigen-receptor induced activation of nuclear factor of activated T-cells. Involved in the negative regulation of positive selection and mitosis of T-cells. May act by linking signaling proteins such as ZAP70 with CBL, leading to a CBL dependent degradation of signaling proteins. This is Src-like-adapter (SLA) from Homo sapiens (Human).